We begin with the raw amino-acid sequence, 435 residues long: Adenylosuccinate synthetase (435 aa).

Residues 17–23 (GDEGKGK) and 45–47 (GHT) each bind GTP. The active-site Proton acceptor is the Asp-18. Residues Asp-18 and Gly-45 each coordinate Mg(2+). Residues 18–21 (DEGK), 43–46 (NAGH), Thr-134, Arg-148, Gln-229, Thr-244, and Arg-308 contribute to the IMP site. Residue His-46 is the Proton donor of the active site. 304–310 (SVTGRPR) contributes to the substrate binding site. GTP-binding positions include Arg-310, 336–338 (KLD), and 418–420 (STG).

The protein belongs to the adenylosuccinate synthetase family. As to quaternary structure, homodimer. It depends on Mg(2+) as a cofactor.

The protein resides in the cytoplasm. The catalysed reaction is IMP + L-aspartate + GTP = N(6)-(1,2-dicarboxyethyl)-AMP + GDP + phosphate + 2 H(+). Its pathway is purine metabolism; AMP biosynthesis via de novo pathway; AMP from IMP: step 1/2. In terms of biological role, plays an important role in the de novo pathway of purine nucleotide biosynthesis. Catalyzes the first committed step in the biosynthesis of AMP from IMP. This Bordetella parapertussis (strain 12822 / ATCC BAA-587 / NCTC 13253) protein is Adenylosuccinate synthetase.